A 644-amino-acid chain; its full sequence is Tubulin--tyrosine ligase-like protein 12 (644 aa).

Over residues 1–13 (MEAERGPERRPAE) the composition is skewed to basic and acidic residues. The segment at 1-25 (MEAERGPERRPAERSSPGQTPEEGA) is disordered. The TTL domain occupies 300–644 (PHGHIFKVYT…PGGCHVTCLV (345 aa)). Residues 450–453 (SKYI), K468, and D470 each bind ATP.

The protein belongs to the tubulin--tyrosine ligase family. In terms of assembly, interacts with MAVS; the interaction prevents MAVS binding to TBK1 and IKBKE. Interacts (via N-terminus) with TBK1 (via protein kinase domain). Interacts (via TTL domain) with IKBKE (via protein kinase domain). Interacts with tubulin alpha. Interacts with histone H3 and histone H4 (when trimethylated at 'Lys-20' (H4K20me3)). Interacts with CBX3. In terms of tissue distribution, expressed in the basal layer of prostate and endothelial cells. Increased expression in prostatic intraepithelial neoplasia and metastatic lesions.

The protein localises to the cytoplasm. Its subcellular location is the midbody. The protein resides in the cytoskeleton. It localises to the microtubule organizing center. It is found in the centrosome. The protein localises to the spindle. Its subcellular location is the nucleus. Its function is as follows. Negatively regulates post-translational modifications of tubulin, including detyrosination of the C-terminus and polyglutamylation of glutamate residues. Also, indirectly promotes histone H4 trimethylation at 'Lys-20' (H4K20me3). Probably by controlling tubulin and/or histone H4 post-translational modifications, plays a role in mitosis and in maintaining chromosome number stability. During RNA virus-mediated infection, acts as a negative regulator of the RIG-I pathway by preventing MAVS binding to TBK1 and IKBKE. The chain is Tubulin--tyrosine ligase-like protein 12 (TTLL12) from Homo sapiens (Human).